The chain runs to 295 residues: GTPase Era (295 aa).

In terms of domain architecture, Era-type G spans 3–170 (KSGFVTIVGR…VDLMKTELPE (168 aa)). Residues 11–18 (GRPNVGKS) form a G1 region. Residue 11–18 (GRPNVGKS) coordinates GTP. The interval 37-41 (QTTRN) is G2. Residues 58–61 (DTPG) are G3. Residues 58–62 (DTPGI) and 120–123 (NKID) each bind GTP. The segment at 120–123 (NKID) is G4. Residues 149 to 151 (IAA) form a G5 region. Positions 201-278 (LRDEVPHGIA…NVKIWVKVRK (78 aa)) constitute a KH type-2 domain.

This sequence belongs to the TRAFAC class TrmE-Era-EngA-EngB-Septin-like GTPase superfamily. Era GTPase family. Monomer.

The protein localises to the cytoplasm. It is found in the cell membrane. Functionally, an essential GTPase that binds both GDP and GTP, with rapid nucleotide exchange. Plays a role in 16S rRNA processing and 30S ribosomal subunit biogenesis and possibly also in cell cycle regulation and energy metabolism. This Clostridium botulinum (strain Eklund 17B / Type B) protein is GTPase Era.